Consider the following 118-residue polypeptide: Large ribosomal subunit protein bL20 (118 aa).

It belongs to the bacterial ribosomal protein bL20 family.

In terms of biological role, binds directly to 23S ribosomal RNA and is necessary for the in vitro assembly process of the 50S ribosomal subunit. It is not involved in the protein synthesizing functions of that subunit. The chain is Large ribosomal subunit protein bL20 from Rhodopirellula baltica (strain DSM 10527 / NCIMB 13988 / SH1).